Consider the following 406-residue polypeptide: Arginine deiminase (406 aa).

Cys-396 acts as the Amidino-cysteine intermediate in catalysis.

It belongs to the arginine deiminase family.

It is found in the cytoplasm. It carries out the reaction L-arginine + H2O = L-citrulline + NH4(+). Its pathway is amino-acid degradation; L-arginine degradation via ADI pathway; carbamoyl phosphate from L-arginine: step 1/2. The sequence is that of Arginine deiminase from Aliivibrio salmonicida (strain LFI1238) (Vibrio salmonicida (strain LFI1238)).